Consider the following 1312-residue polypeptide: Angiotensin-converting enzyme (1312 aa).

The signal sequence occupies residues 1–34 (MGAASGQRGRWPLSPPLLMLSLLVLLLQPSPAPA). Residues 35–1264 (LDPGLQPGNF…LEPQQARVGQ (1230 aa)) are Extracellular-facing. Peptidase M2 domains are found at residues 45-629 (SPDE…LGWP) and 648-1227 (ETDE…LGWP). Asn-59, Asn-79, Asn-116, Asn-151, and Asn-165 each carry an N-linked (GlcNAc...) asparagine glycan. A disulfide bridge connects residues Cys-162 and Cys-170. Tyr-236 contributes to the chloride binding site. N-linked (GlcNAc...) asparagine glycosylation is present at Asn-323. The cysteines at positions 364 and 382 are disulfide-linked. Residue His-395 coordinates Zn(2+). Glu-396 serves as the catalytic Proton acceptor 1. Zn(2+)-binding residues include His-399 and Glu-423. N-linked (GlcNAc...) asparagine glycosylation occurs at Asn-514. His-525 acts as the Proton donor 1 in catalysis. Arg-534 is a binding site for chloride. An intrachain disulfide couples Cys-550 to Cys-562. Asn-682 carries N-linked (GlcNAc...) asparagine glycosylation. Asn-700 and Asn-719 each carry an N-linked (GlcNAc...) (complex) asparagine glycan. A disulfide bond links Cys-762 and Cys-768. Asn-765 carries an N-linked (GlcNAc...) asparagine glycan. Arg-796 and Tyr-834 together coordinate chloride. Residue Asn-947 is glycosylated (N-linked (GlcNAc...) asparagine). A disulfide bond links Cys-962 and Cys-980. His-993 serves as a coordination point for Zn(2+). Glu-994 functions as the Proton acceptor 2 in the catalytic mechanism. Zn(2+) contacts are provided by His-997 and Glu-1021. Chloride contacts are provided by Trp-1095 and Arg-1099. His-1123 acts as the Proton donor 2 in catalysis. Arg-1132 serves as a coordination point for chloride. Cysteines 1148 and 1160 form a disulfide. Asn-1196 carries N-linked (GlcNAc...) asparagine glycosylation. The juxtamembrane stalk stretch occupies residues 1220-1261 (HGETLGWPEYNWAPNTARAEGSTAESNRVNFLGLYLEPQQAR). The chain crosses the membrane as a helical span at residues 1265 to 1281 (WVLLFLGVALLVATVGL). The Cytoplasmic portion of the chain corresponds to 1282-1312 (AHRLYNIRNHHSLRRPHRGPQFGSEVELRHS). Ser-1305 carries the post-translational modification Phosphoserine.

It belongs to the peptidase M2 family. As to quaternary structure, monomer and homodimer; homodimerizes following binding to an inhibitor. Interacts with calmodulin (CALM1, CALM2 or CALM3); interaction takes place in the cytoplasmic region and regulates phosphorylation and proteolytic cleavage. Zn(2+) serves as cofactor. The cofactor is chloride. In terms of processing, produced following proteolytic cleavage by secretase enzymes that cleave the transmembrane form in the juxtamembrane stalk region upstream of the transmembrane region. Cleavage can take place at different sites of the juxtamembrane stalk region. Phosphorylated by CK2 on Ser-1305; which allows membrane retention. Phosphorylated on tyrosine residues on its extracellular part, promoting cleavage by secretase enzymes and formation of the soluble form (Angiotensin-converting enzyme, soluble form). Highly expressed in kidney and lung; not expressed in the liver. In the brain, expressed in the cerebral cortex, hippocampus, cerebellum and basal ganglia/brainstem. Highly expressed in dopamine receptor DRD1-expressing neurons in the dorsal striatum and the nucleus accumbens of the brain. In terms of tissue distribution, specifically expressed in spermatocytes, adult testis.

It localises to the cell membrane. The protein localises to the cytoplasm. Its subcellular location is the secreted. The enzyme catalyses Release of a C-terminal dipeptide, oligopeptide-|-Xaa-Yaa, when Xaa is not Pro, and Yaa is neither Asp nor Glu. Thus, conversion of angiotensin I to angiotensin II, with increase in vasoconstrictor activity, but no action on angiotensin II.. It carries out the reaction angiotensin I + H2O = L-histidyl-L-leucine + angiotensin II. It catalyses the reaction bradykinin + H2O = L-Phe-L-Arg + bradykinin(1-7). The catalysed reaction is substance P + H2O = substance P(1-9) + L-Leu-L-Met-NH2. The enzyme catalyses substance P + H2O = substance P(1-8) + Gly-L-Leu-L-Met-NH2. It carries out the reaction substance P + H2O = L-Phe-L-Phe-Gly-L-Leu-L-Met-NH2 + substance P(1-6). It catalyses the reaction neurotensin + H2O = neurotensin(1-11) + L-isoleucyl-L-leucine. The catalysed reaction is goralatide + H2O = N-acetyl-L-seryl-L-aspartate + L-lysyl-L-proline. The enzyme catalyses Met-enkephalin + H2O = L-phenylalanyl-L-methionine + L-tyrosylglycylglycine. It carries out the reaction Leu-enkephalin + H2O = L-tyrosylglycylglycine + L-phenylalanyl-L-leucine. It catalyses the reaction Met-enkephalin-Arg-Phe + H2O = L-arginyl-L-phenylalanine + Met-enkephalin. With respect to regulation, the dipeptidyl carboxypeptidase activity is specifically inhibited by lisinopril, captopril and enalaprilat. The N-terminal catalytic domain, but not the C-terminal catalytic domain, is specifically inhibited by the phosphinic peptide RXP 407. Its activity is regulated as follows. The putative GPIase activity is nearly insensitive to captopril. Dipeptidyl carboxypeptidase that removes dipeptides from the C-terminus of a variety of circulating hormones, such as angiotensin I, bradykinin or enkephalins, thereby playing a key role in the regulation of blood pressure, electrolyte homeostasis or synaptic plasticity. Composed of two similar catalytic domains, each possessing a functional active site, with different selectivity for substrates. Plays a major role in the angiotensin-renin system that regulates blood pressure and sodium retention by the kidney by converting angiotensin I to angiotensin II, resulting in an increase of the vasoconstrictor activity of angiotensin. Also able to inactivate bradykinin, a potent vasodilator, and therefore enhance the blood pressure response. Acts as a regulator of synaptic transmission by mediating cleavage of neuropeptide hormones, such as substance P, neurotensin or enkephalins. Catalyzes degradation of different enkephalin neuropeptides (Met-enkephalin, Leu-enkephalin, Met-enkephalin-Arg-Phe and possibly Met-enkephalin-Arg-Gly-Leu). Acts as a regulator of synaptic plasticity in the nucleus accumbens of the brain by mediating cleavage of Met-enkephalin-Arg-Phe, a strong ligand of Mu-type opioid receptor OPRM1, into Met-enkephalin. Met-enkephalin-Arg-Phe cleavage by ACE decreases activation of OPRM1, leading to long-term synaptic potentiation of glutamate release. Also acts as a regulator of hematopoietic stem cell differentiation by mediating degradation of hemoregulatory peptide N-acetyl-SDKP (AcSDKP). Acts as a regulator of cannabinoid signaling pathway by mediating degradation of hemopressin, an antagonist peptide of the cannabinoid receptor CNR1. Involved in amyloid-beta metabolism by catalyzing degradation of Amyloid-beta protein 40 and Amyloid-beta protein 42 peptides, thereby preventing plaque formation. Catalyzes cleavage of cholecystokinin (maturation of Cholecystokinin-8 and Cholecystokinin-5) and Gonadoliberin-1 (both maturation and degradation) hormones. Degradation of hemoregulatory peptide N-acetyl-SDKP (AcSDKP) and amyloid-beta proteins is mediated by the N-terminal catalytic domain, while angiotensin I and cholecystokinin cleavage is mediated by the C-terminal catalytic region. Its function is as follows. Soluble form that is released in blood plasma and other body fluids following proteolytic cleavage in the juxtamembrane stalk region. In terms of biological role, isoform produced by alternative promoter usage that is specifically expressed in spermatocytes and adult testis, and which is required for male fertility. In contrast to somatic isoforms, only contains one catalytic domain. Acts as a dipeptidyl carboxypeptidase that removes dipeptides from the C-terminus of substrates. The identity of substrates that are needed for male fertility is unknown. Isoform Testis-specific and isoform Somatic have distinct activities and cannot completely compensate for the loss of the other when expressed in somatic tissues or testis. May also have a glycosidase activity which releases GPI-anchored proteins from the membrane by cleaving the mannose linkage in the GPI moiety. The GPIase activity was reported to be essential for the egg-binding ability of the sperm. This activity is however unclear and has been challenged by other groups, suggesting that it may be indirect. The polypeptide is Angiotensin-converting enzyme (Mus musculus (Mouse)).